A 20-amino-acid polypeptide reads, in one-letter code: Trypsin inhibitor DE-3 (20 aa).

Belongs to the protease inhibitor I3 (leguminous Kunitz-type inhibitor) family.

Its function is as follows. Inhibition of trypsin. The polypeptide is Trypsin inhibitor DE-3 (Erythrina corallodendron (Coral tree)).